A 451-amino-acid polypeptide reads, in one-letter code: MKPTRFYQHRRVLVIGLAKSGAAAARLLAELGAKVVVNDQKPLSENMEAKQLEPLGIRVVCGGHPLELLDEPFDLVVKNPGIPYTNPMVKKALEKGLPVVTEVELAYHISEGSFIGITGSNGKTTTTTLIYEMLKADGQDPLLAGNIGLVACEVAREAKPGQWLVTELSSFQLAGIDKFRPAIAVLLNIFDAHLDYHGTKEAYAAAKANIFRNQTERDYAVVNADDPLVMNIASSVRSQKVLFSATKLLGEGAYVQDGAIYWNGDPVIRIADIVLPGQHNLENILAAVAAAKLAGASDEAIRQVLATFSGVKHRLQYVAEIDGRRFYNDSKATNILATQKALSAFAGEPVILLAGGLDRGNEFDDLLPYLQQVKAVVLFGQTADKIGRIAQKAGIETIRYVDNVEKAVPVAFELSEPGDVILLSPACASWDQYKTFEERGDIFINAVHKLK.

Residue 119 to 125 (GSNGKTT) participates in ATP binding.

Belongs to the MurCDEF family.

It is found in the cytoplasm. It catalyses the reaction UDP-N-acetyl-alpha-D-muramoyl-L-alanine + D-glutamate + ATP = UDP-N-acetyl-alpha-D-muramoyl-L-alanyl-D-glutamate + ADP + phosphate + H(+). It participates in cell wall biogenesis; peptidoglycan biosynthesis. Its function is as follows. Cell wall formation. Catalyzes the addition of glutamate to the nucleotide precursor UDP-N-acetylmuramoyl-L-alanine (UMA). This is UDP-N-acetylmuramoylalanine--D-glutamate ligase from Geobacillus kaustophilus (strain HTA426).